A 262-amino-acid polypeptide reads, in one-letter code: MNKLFSFWKRKNETRSRTSSDPSIGQGYKLREKDLKKLHRAASVGDLKKLKEYLQLKKYDVNMQDKKYRTPLHLACANGHRDVVLFLIEQQCKINIRDSENKSPLIKAVQCQNEDCATILLNCGADPNLRDVRYNTALHYAVCGQSFSLVEQLLDYEADLEAKNKDGYTPLLVAVINNNPKMVKFLLEKGADVNASDNYQRTALILAVSGEPTRLVKLLLQQGVELSCRDICGFTAEEYAYFNGFTVYPQFTASHGRKKHVK.

ANK repeat units lie at residues 67–96 (KYRT…KINI), 100–129 (ENKS…DPNL), 133–162 (RYNT…DLEA), 166–195 (DGYT…DVNA), and 199–228 (YQRT…ELSC).

The sequence is that of Ankyrin repeat domain-containing protein 7 (ANKRD7) from Macaca fascicularis (Crab-eating macaque).